We begin with the raw amino-acid sequence, 220 residues long: Cysteine-rich venom protein (220 aa).

The 128-residue stretch at 20 to 147 folds into the SCP domain; that stretch reads DLHNSLRRSV…AYKYFYVCQY (128 aa). 8 cysteine pairs are disulfide-bonded: Cys-56-Cys-134, Cys-73-Cys-148, Cys-129-Cys-145, Cys-167-Cys-174, Cys-170-Cys-179, Cys-183-Cys-215, Cys-192-Cys-209, and Cys-200-Cys-213. Residues 183-215 enclose the ShKT domain; sequence CTREDEFINCNDLVKQGCQTDYLKSNCAASCFC.

Expressed by the venom gland.

The protein resides in the secreted. Blocks contraction of smooth muscle elicited by high potassium-induced depolarization, but does not block caffeine-stimulated contraction. May target voltage-gated calcium channels in smooth muscle. The chain is Cysteine-rich venom protein from Echis coloratus (Carpet viper).